A 432-amino-acid polypeptide reads, in one-letter code: 2-oxoglutarate-dependent dioxygenase AOP2 (432 aa).

The Fe2OG dioxygenase domain maps to 281 to 378 (SGDDVEANDD…RYTAAIFTCP (98 aa)). Fe cation contacts are provided by histidine 301, aspartate 303, and histidine 358. Arginine 369 lines the 2-oxoglutarate pocket.

It belongs to the iron/ascorbate-dependent oxidoreductase family. It depends on Fe(2+) as a cofactor.

Functionally, 2-oxoglutarate-dependent dioxygenase involved in glucosinolates biosynthesis. Catalyzes the conversion of methylsulfinylalkyl glucosinolates to alkenyl glucosinolates. The polypeptide is 2-oxoglutarate-dependent dioxygenase AOP2 (AOP2) (Arabidopsis thaliana (Mouse-ear cress)).